The following is a 33-amino-acid chain: Mu/delta-theraphotoxin-Pm2a (33 aa).

3 disulfides stabilise this stretch: Cys2/Cys16, Cys9/Cys21, and Cys15/Cys27. Phe33 carries the phenylalanine amide modification.

As to expression, expressed by the venom gland.

It is found in the secreted. Its function is as follows. Gating-modifier toxin with very weak activity on Nav1.7/SCN9A and Nav1.8/SCN10A. Shows 22% peak current inhibition (at 10 uM) on Nav1.8/SCN10A sodium channels. Show peak current inhibition and delays fast inactivation on Nav1.7/SCN9A (EC(50)&gt;10 uM). This Poecilotheria metallica (Metallic blue ornamental tree spider) protein is Mu/delta-theraphotoxin-Pm2a.